The following is a 270-amino-acid chain: Fluoride-specific ion channel FluC 2 (270 aa).

The next 4 membrane-spanning stretches (helical) occupy residues 4–24 (IIIL…FIML), 35–55 (LDIL…TALY), 67–87 (IIGT…YGSV), and 96–116 (AFLI…VAVL). Residues glycine 74 and serine 77 each contribute to the Na(+) site.

It belongs to the fluoride channel Fluc/FEX (TC 1.A.43) family.

Its subcellular location is the cell inner membrane. It catalyses the reaction fluoride(in) = fluoride(out). Its activity is regulated as follows. Na(+) is not transported, but it plays an essential structural role and its presence is essential for fluoride channel function. Functionally, fluoride-specific ion channel. Important for reducing fluoride concentration in the cell, thus reducing its toxicity. In Brucella melitensis biotype 1 (strain ATCC 23456 / CCUG 17765 / NCTC 10094 / 16M), this protein is Fluoride-specific ion channel FluC 2.